The chain runs to 161 residues: Pleiotrophin-B (161 aa).

An N-terminal signal peptide occupies residues 1–23 (MHHQHGLFMLALLAFLLVMTVLG). 5 disulfides stabilise this stretch: cysteine 41–cysteine 70, cysteine 49–cysteine 79, cysteine 56–cysteine 83, cysteine 93–cysteine 125, and cysteine 103–cysteine 135. Chondroitin sulfate binding stretches follow at residues 86-93 (KKQFGAEC) and 117-125 (KRALHNAEC). Residues 136 to 161 (GKVTKPKLQESKKKKKEGKNKEKLLD) are disordered. The interval 141 to 161 (PKLQESKKKKKEGKNKEKLLD) is chondroitin sulfate A binding.

The protein belongs to the pleiotrophin family. As to expression, expressed in high levels in brain and eye. Lower levels in bone. In the tailbud embryo stage, it is expressed exclusively in the central nervous system, especially in the hind region of the brain.

The protein resides in the secreted. In terms of biological role, secreted growth factor that mediates its signal through cell-surface proteoglycan and non-proteoglycan receptors. Binds cell-surface proteoglycan receptor via their chondroitin sulfate (CS) groups. Thereby regulates many processes like cell proliferation, cell survival, cell growth, cell differentiation and cell migration. Has antibacterial activity against both Gram-positive and Gram-negative bacteria. The polypeptide is Pleiotrophin-B (ptn-b) (Xenopus laevis (African clawed frog)).